A 239-amino-acid chain; its full sequence is Pyridoxine 5'-phosphate synthase (239 aa).

A 3-amino-2-oxopropyl phosphate-binding site is contributed by Asn-7. 9-10 serves as a coordination point for 1-deoxy-D-xylulose 5-phosphate; it reads DH. Arg-18 provides a ligand contact to 3-amino-2-oxopropyl phosphate. The Proton acceptor role is filled by His-43. 1-deoxy-D-xylulose 5-phosphate-binding residues include Arg-45 and His-50. The Proton acceptor role is filled by Glu-70. Thr-100 lines the 1-deoxy-D-xylulose 5-phosphate pocket. Residue His-191 is the Proton donor of the active site. 3-amino-2-oxopropyl phosphate is bound by residues Gly-192 and 213–214; that span reads GH.

It belongs to the PNP synthase family. As to quaternary structure, homooctamer; tetramer of dimers.

The protein localises to the cytoplasm. It catalyses the reaction 3-amino-2-oxopropyl phosphate + 1-deoxy-D-xylulose 5-phosphate = pyridoxine 5'-phosphate + phosphate + 2 H2O + H(+). Its pathway is cofactor biosynthesis; pyridoxine 5'-phosphate biosynthesis; pyridoxine 5'-phosphate from D-erythrose 4-phosphate: step 5/5. Its function is as follows. Catalyzes the complicated ring closure reaction between the two acyclic compounds 1-deoxy-D-xylulose-5-phosphate (DXP) and 3-amino-2-oxopropyl phosphate (1-amino-acetone-3-phosphate or AAP) to form pyridoxine 5'-phosphate (PNP) and inorganic phosphate. This Trichlorobacter lovleyi (strain ATCC BAA-1151 / DSM 17278 / SZ) (Geobacter lovleyi) protein is Pyridoxine 5'-phosphate synthase.